A 142-amino-acid polypeptide reads, in one-letter code: Protein archease (142 aa).

The Ca(2+) site is built by D12, D141, and I142.

It belongs to the archease family.

Functionally, activates the tRNA-splicing ligase complex by facilitating the enzymatic turnover of catalytic subunit RtcB. Acts by promoting the guanylylation of RtcB, a key intermediate step in tRNA ligation. Can also alter the NTP specificity of RtcB such that ATP, dGTP or ITP is used efficiently. This chain is Protein archease, found in Pyrococcus furiosus (strain ATCC 43587 / DSM 3638 / JCM 8422 / Vc1).